A 416-amino-acid chain; its full sequence is Glutamyl-tRNA reductase 1 (416 aa).

Residues 57 to 60, serine 113, 118 to 120, and glutamine 124 contribute to the substrate site; these read TCNR and DFE. Residue cysteine 58 is the Nucleophile of the active site. 193 to 198 lines the NADP(+) pocket; that stretch reads GTGKIG.

Belongs to the glutamyl-tRNA reductase family. As to quaternary structure, homodimer.

The enzyme catalyses (S)-4-amino-5-oxopentanoate + tRNA(Glu) + NADP(+) = L-glutamyl-tRNA(Glu) + NADPH + H(+). It functions in the pathway porphyrin-containing compound metabolism; protoporphyrin-IX biosynthesis; 5-aminolevulinate from L-glutamyl-tRNA(Glu): step 1/2. Catalyzes the NADPH-dependent reduction of glutamyl-tRNA(Glu) to glutamate 1-semialdehyde (GSA). The sequence is that of Glutamyl-tRNA reductase 1 from Flavobacterium johnsoniae (strain ATCC 17061 / DSM 2064 / JCM 8514 / BCRC 14874 / CCUG 350202 / NBRC 14942 / NCIMB 11054 / UW101) (Cytophaga johnsonae).